A 440-amino-acid chain; its full sequence is WAS/WASL-interacting protein family member 2 (440 aa).

Pro residues predominate over residues 1–18 (MPIPPPPPPPPGPPPPPT). Positions 1–36 (MPIPPPPPPPPGPPPPPTFHQANTEQPKLSRDEQRG) are disordered. The WH2 domain maps to 36–53 (GRGALLQDICKGTKLKKV). R37 bears the Asymmetric dimethylarginine mark. Positions 49-52 (KLKK) are binds actin. Disordered stretches follow at residues 56 to 387 (INDR…DSIT) and 419 to 440 (RIYP…PILR). Positions 116 to 133 (PSSRAAAPRPPVSAASGR) are enriched in low complexity. Residues 161-172 (RPNTTSSTGMKH) show a composition bias toward polar residues. Composition is skewed to pro residues over residues 176-193 (APPP…PTPL), 222-236 (EGPP…PPSP), 249-262 (APPP…PGVP), and 356-378 (RGKP…PPPL).

It belongs to the verprolin family. As to quaternary structure, interacts with WASL and WASP, and this interaction results in cytoplasmic relocation of these two proteins along actin filaments. Interacts with NCK2 resulting in the localization to sites of focal adhesions. No interaction was seen with WASF2 and WASF3. As to expression, expressed mainly in brain, colon, lung and stomach (at protein level). Ubiquitously expressed, with high expression in brain, kidney, lung, and placenta.

It is found in the cytoplasm. The protein localises to the cytoskeleton. Its function is as follows. Plays an active role in the formation of cell surface protrusions downstream of activated PDGFB receptors. Plays an important role in actin-microspike formation through cooperation with WASL. May cooperate with WASP and WASL to induce mobilization and reorganization of the actin filament system. This chain is WAS/WASL-interacting protein family member 2 (WIPF2), found in Homo sapiens (Human).